The following is a 182-amino-acid chain: Ribosome hibernation promotion factor (182 aa).

The protein belongs to the HPF/YfiA ribosome-associated protein family. Long HPF subfamily. As to quaternary structure, interacts with 100S ribosomes.

The protein resides in the cytoplasm. Its function is as follows. Required for dimerization of active 70S ribosomes into 100S ribosomes in stationary phase; 100S ribosomes are translationally inactive and sometimes present during exponential growth. The protein is Ribosome hibernation promotion factor of Streptococcus pyogenes serotype M6 (strain ATCC BAA-946 / MGAS10394).